Reading from the N-terminus, the 176-residue chain is MTRVRPEKQAVVEQLREWIDQSKGMVFFSFEGLTSKDMQAMRADMKRNGLTVKVVKNTLLELAVKEVGLNVDESLFRGTTALLFSNEDELAPFKLFVEQVKKYGVLQAKGGILEGRWISAKEVDAIAKLPGRQELYAQLVGVVSSPMRGLVTVLSGPYRNLVYVLQAIKEKKEKAA.

The protein belongs to the universal ribosomal protein uL10 family. In terms of assembly, part of the ribosomal stalk of the 50S ribosomal subunit. The N-terminus interacts with L11 and the large rRNA to form the base of the stalk. The C-terminus forms an elongated spine to which L12 dimers bind in a sequential fashion forming a multimeric L10(L12)X complex.

In terms of biological role, forms part of the ribosomal stalk, playing a central role in the interaction of the ribosome with GTP-bound translation factors. The sequence is that of Large ribosomal subunit protein uL10 from Coprothermobacter proteolyticus (strain ATCC 35245 / DSM 5265 / OCM 4 / BT).